Here is a 368-residue protein sequence, read N- to C-terminus: UDP-N-acetylglucosamine--N-acetylmuramyl-(pentapeptide) pyrophosphoryl-undecaprenol N-acetylglucosamine transferase (368 aa).

Residues Thr-13–Gly-15, Asn-124, Arg-167, Ser-195, and Gln-296 contribute to the UDP-N-acetyl-alpha-D-glucosamine site.

Belongs to the glycosyltransferase 28 family. MurG subfamily.

It is found in the cell inner membrane. The catalysed reaction is di-trans,octa-cis-undecaprenyl diphospho-N-acetyl-alpha-D-muramoyl-L-alanyl-D-glutamyl-meso-2,6-diaminopimeloyl-D-alanyl-D-alanine + UDP-N-acetyl-alpha-D-glucosamine = di-trans,octa-cis-undecaprenyl diphospho-[N-acetyl-alpha-D-glucosaminyl-(1-&gt;4)]-N-acetyl-alpha-D-muramoyl-L-alanyl-D-glutamyl-meso-2,6-diaminopimeloyl-D-alanyl-D-alanine + UDP + H(+). It functions in the pathway cell wall biogenesis; peptidoglycan biosynthesis. Cell wall formation. Catalyzes the transfer of a GlcNAc subunit on undecaprenyl-pyrophosphoryl-MurNAc-pentapeptide (lipid intermediate I) to form undecaprenyl-pyrophosphoryl-MurNAc-(pentapeptide)GlcNAc (lipid intermediate II). The chain is UDP-N-acetylglucosamine--N-acetylmuramyl-(pentapeptide) pyrophosphoryl-undecaprenol N-acetylglucosamine transferase from Maricaulis maris (strain MCS10) (Caulobacter maris).